A 402-amino-acid polypeptide reads, in one-letter code: 1-deoxy-D-xylulose 5-phosphate reductoisomerase (402 aa).

Residues T25, G26, S27, V28, R52, N53, and N136 each contribute to the NADPH site. Residue K137 participates in 1-deoxy-D-xylulose 5-phosphate binding. NADPH is bound at residue E138. Mn(2+) is bound at residue D162. Positions 163, 164, 188, and 211 each coordinate 1-deoxy-D-xylulose 5-phosphate. Residue E164 participates in Mn(2+) binding. Position 217 (G217) interacts with NADPH. Residues S224, N229, K230, and E233 each coordinate 1-deoxy-D-xylulose 5-phosphate. E233 serves as a coordination point for Mn(2+).

This sequence belongs to the DXR family. Requires Mg(2+) as cofactor. It depends on Mn(2+) as a cofactor.

It carries out the reaction 2-C-methyl-D-erythritol 4-phosphate + NADP(+) = 1-deoxy-D-xylulose 5-phosphate + NADPH + H(+). Its pathway is isoprenoid biosynthesis; isopentenyl diphosphate biosynthesis via DXP pathway; isopentenyl diphosphate from 1-deoxy-D-xylulose 5-phosphate: step 1/6. Its function is as follows. Catalyzes the NADPH-dependent rearrangement and reduction of 1-deoxy-D-xylulose-5-phosphate (DXP) to 2-C-methyl-D-erythritol 4-phosphate (MEP). The chain is 1-deoxy-D-xylulose 5-phosphate reductoisomerase from Rhodospirillum centenum (strain ATCC 51521 / SW).